A 385-amino-acid chain; its full sequence is Trehalose-phosphate phosphatase A (385 aa).

A disordered region spans residues 1–21; sequence MDMKSGHSSPVMTDSPPISNS.

This sequence belongs to the trehalose phosphatase family. A divalent metal cation is required as a cofactor. As to expression, expressed in flowers.

The enzyme catalyses alpha,alpha-trehalose 6-phosphate + H2O = alpha,alpha-trehalose + phosphate. It functions in the pathway glycan biosynthesis; trehalose biosynthesis. Removes the phosphate from trehalose 6-phosphate to produce free trehalose. Trehalose accumulation in plant may improve abiotic stress tolerance. In Arabidopsis thaliana (Mouse-ear cress), this protein is Trehalose-phosphate phosphatase A (TPPA).